We begin with the raw amino-acid sequence, 1019 residues long: Macrophage colony-stimulating factor 1 receptor 2 (1019 aa).

Positions 1-18 (MKSYCLLLSITLSCCCSA) are cleaved as a signal peptide. Residues 19 to 576 (EDLPDPPSIH…LREHNSAFMS (558 aa)) are Extracellular-facing. Ig-like C2-type domains follow at residues 37–109 (QAEA…IHLY), 106–212 (IHLY…LLVA), and 224–312 (QNKA…LIVL). Cysteines 52 and 92 form a disulfide. N-linked (GlcNAc...) asparagine glycans are attached at residues N96, N148, N169, N249, N342, N346, N355, N369, N379, N408, N422, N429, N433, and N514. Cystine bridges form between C139-C193 and C239-C294. Ig-like C2-type domains are found at residues 383–474 (STTV…LRIY) and 487–567 (TLTC…VFHL). A disulfide bridge links C490 with C552. A helical transmembrane segment spans residues 577 to 597 (ALIGAGSTAAILFLLLLVVFY). The Cytoplasmic portion of the chain corresponds to 598–1019 (KWRQKPKYEI…LSVTNIYQLS (422 aa)). Positions 601–633 (QKPKYEIRWKIIESTEGNHYTFVDPTLLPYNYK) are regulatory juxtamembrane domain. Residue Y620 is modified to Phosphotyrosine; by autocatalysis. Residues 641–963 (LRLGAVLGSG…MICQLIDRLL (323 aa)) form the Protein kinase domain. Residues 647 to 655 (LGSGAFGKV) and K674 contribute to the ATP site. Phosphotyrosine; by autocatalysis occurs at positions 756 and 778. The active-site Proton acceptor is D827. The activation loop stretch occupies residues 845–867 (DFGLARDIQNDDSYIVQGNARLP). Phosphotyrosine; by autocatalysis is present on residues Y858 and Y974. Positions 970–1001 (NHQSYSNINETKKDDFKGGKSQRRGEEEEQRR) are disordered. Basic and acidic residues predominate over residues 979-1001 (ETKKDDFKGGKSQRRGEEEEQRR). Y1016 carries the phosphotyrosine; by autocatalysis modification.

Belongs to the protein kinase superfamily. Tyr protein kinase family. CSF-1/PDGF receptor subfamily. As to quaternary structure, monomer. Homodimer. Interacts with CSF1. Post-translationally, autophosphorylated in response to CSF1 binding. autophosphorylation, leading to its degradation. Ubiquitinated. Becomes rapidly polyubiquitinated after autophosphorylation, leading to its degradation.

It localises to the cell membrane. The enzyme catalyses L-tyrosyl-[protein] + ATP = O-phospho-L-tyrosyl-[protein] + ADP + H(+). Present in an inactive conformation in the absence of bound ligand. CSF1 binding leads to dimerization and activation by autophosphorylation on tyrosine residues. In terms of biological role, tyrosine-protein kinase that acts as a cell-surface receptor for CSF1 and plays an essential role in the regulation of survival, proliferation and differentiation of hematopoietic precursor cells, especially mononuclear phagocytes, such as macrophages and monocytes. Plays an important role in innate immunity and in inflammatory processes. Plays an important role in the regulation of osteoclast proliferation and differentiation, the regulation of bone resorption, and is required for normal bone development. Promotes reorganization of the actin cytoskeleton, regulates formation of membrane ruffles, cell adhesion and cell migration. Activates several signaling pathways in response to ligand binding. This is Macrophage colony-stimulating factor 1 receptor 2 (csf1r2) from Takifugu rubripes (Japanese pufferfish).